Consider the following 367-residue polypeptide: UDP-N-acetylenolpyruvoylglucosamine reductase (367 aa).

Residues 29 to 205 form the FAD-binding PCMH-type domain; sequence VGPVAQRVIT…LEVEFKLDAS (177 aa). The active site involves arginine 177. Serine 260 functions as the Proton donor in the catalytic mechanism. Residue glutamate 359 is part of the active site.

The protein belongs to the MurB family. The cofactor is FAD.

It localises to the cytoplasm. The catalysed reaction is UDP-N-acetyl-alpha-D-muramate + NADP(+) = UDP-N-acetyl-3-O-(1-carboxyvinyl)-alpha-D-glucosamine + NADPH + H(+). The protein operates within cell wall biogenesis; peptidoglycan biosynthesis. In terms of biological role, cell wall formation. The sequence is that of UDP-N-acetylenolpyruvoylglucosamine reductase from Mycobacterium leprae (strain Br4923).